The following is a 410-amino-acid chain: Neuroserpin (410 aa).

An N-terminal signal peptide occupies residues 1 to 16 (MAYLGLLSLVALQSLV). S83 carries the phosphoserine modification. N157, N321, and N401 each carry an N-linked (GlcNAc...) asparagine glycan. O-linked (Xyl...) (chondroitin sulfate) serine glycosylation occurs at S403.

The protein belongs to the serpin family. As to expression, detected in adult pituitary and adrenal gland.

Its subcellular location is the secreted. It localises to the cytoplasmic vesicle. The protein resides in the secretory vesicle lumen. The protein localises to the perikaryon. Functionally, serine protease inhibitor that inhibits plasminogen activators and plasmin but not thrombin. May be involved in the formation or reorganization of synaptic connections as well as for synaptic plasticity in the adult nervous system. May protect neurons from cell damage by tissue-type plasminogen activator. In Rattus norvegicus (Rat), this protein is Neuroserpin (Serpini1).